The sequence spans 322 residues: Deoxyhypusine hydroxylase (322 aa).

Residues histidine 78, glutamate 79, histidine 111, and glutamate 112 each contribute to the Fe cation site. HEAT-like PBS-type repeat units follow at residues valine 109–asparagine 135, leucine 203–aspartate 229, phenylalanine 234–arginine 260, and valine 267–aspartate 293. 4 residues coordinate Fe cation: histidine 236, glutamate 237, histidine 269, and glutamate 270.

The protein belongs to the deoxyhypusine hydroxylase family. Requires Fe(2+) as cofactor.

The protein resides in the cytoplasm. It localises to the nucleus. The enzyme catalyses [eIF5A protein]-deoxyhypusine + AH2 + O2 = [eIF5A protein]-hypusine + A + H2O. The protein operates within protein modification; eIF5A hypusination. Catalyzes the hydroxylation of the N(6)-(4-aminobutyl)-L-lysine intermediate to form hypusine, an essential post-translational modification only found in mature eIF-5A factor. The polypeptide is Deoxyhypusine hydroxylase (Candida glabrata (strain ATCC 2001 / BCRC 20586 / JCM 3761 / NBRC 0622 / NRRL Y-65 / CBS 138) (Yeast)).